The primary structure comprises 726 residues: PWWP domain-containing protein 2 (726 aa).

A compositionally biased stretch (basic and acidic residues) spans 1-10; the sequence is MSTESERIES. The interval 1 to 26 is disordered; that stretch reads MSTESERIESVSEANASSLEVGNDQM. Over residues 12 to 26 the composition is skewed to polar residues; it reads SEANASSLEVGNDQM. One can recognise a PWWP domain in the interval 199-260; the sequence is DSDLVWAKVR…ASRIKPFRQH (62 aa). The segment at 392 to 441 is disordered; that stretch reads APKISPAEEQSSLVEVSDPEPTKSKQVYTKRRKTNLQTEQSSLVEVSDPD. Polar residues predominate over residues 426 to 435; the sequence is NLQTEQSSLV. 2 short sequence motifs (nuclear localization signal) span residues 460 to 467 and 495 to 502; these read KKKEKTLA and KKRKVVQS. Disordered stretches follow at residues 472-545 and 568-726; these read EKRV…PQKA and TRLL…VSAE. Residues 494–512 are compositionally biased toward basic residues; sequence EKKRKVVQSKVPKSTKKIK. Residues 606–634 show a composition bias toward polar residues; it reads SPSTTLSSPHAASVTKTTSGKSNSVSLDH. Residues 658 to 688 are compositionally biased toward basic and acidic residues; the sequence is LESRDLKDSSKEQVVHEDKKEAANVADEKSI.

Belongs to the PDP family. As to quaternary structure, interacts with DEK3. Binds to MSI4/FVE and MSI5. Component of the PRC2 (polycomb repressive complex 2) complex which regulates histone methylation on histone H3K27.

It localises to the nucleus. Functionally, together with PDP1, PDP3 and PDP6, interacts with MSI4/FVE and MSI5 to suppress FLC, MAF4 and MAF5 expression by regulating the function of the PRC2 complex and modulating H3K27me3 level, thereby promoting flowering. The polypeptide is PWWP domain-containing protein 2 (Arabidopsis thaliana (Mouse-ear cress)).